Consider the following 122-residue polypeptide: MPPNPTGPTNSQLRMLARFLRKAARANSASIWRVVAEFVEKPRRQRVIVNVGKLNRVAKEGDVVVVPGKLLAGGQLNKKIIVAAVKISPKAARKVIEAGGEVLTIPELVRKYPRGSGVRIVI.

The protein belongs to the eukaryotic ribosomal protein eL18 family.

The polypeptide is Large ribosomal subunit protein eL18 (Pyrobaculum aerophilum (strain ATCC 51768 / DSM 7523 / JCM 9630 / CIP 104966 / NBRC 100827 / IM2)).